The following is a 245-amino-acid chain: Flavin-dependent thymidylate synthase (245 aa).

The region spanning 5–210 is the ThyX domain; that stretch reads IKVRLVNYTK…ELRPIIRWAK (206 aa). FAD is bound by residues Ser59, 83–85, and Gln91; that span reads RHR. DUMP is bound by residues 80–83, 91–95, and Arg149; these read QLVR and QQSMR. Positions 83–93 match the ThyX motif motif; that stretch reads RHRIASYTQQS. Residues 165–167 and His171 each bind FAD; that span reads NLR. Residue Arg176 participates in dUMP binding. The active-site Involved in ionization of N3 of dUMP, leading to its activation is the Arg176.

Belongs to the thymidylate synthase ThyX family. In terms of assembly, homotetramer. FAD is required as a cofactor.

It catalyses the reaction dUMP + (6R)-5,10-methylene-5,6,7,8-tetrahydrofolate + NADPH + H(+) = dTMP + (6S)-5,6,7,8-tetrahydrofolate + NADP(+). It participates in pyrimidine metabolism; dTTP biosynthesis. In terms of biological role, catalyzes the reductive methylation of 2'-deoxyuridine-5'-monophosphate (dUMP) to 2'-deoxythymidine-5'-monophosphate (dTMP) while utilizing 5,10-methylenetetrahydrofolate (mTHF) as the methyl donor, and NADPH and FADH(2) as the reductant. This Thermococcus onnurineus (strain NA1) protein is Flavin-dependent thymidylate synthase.